We begin with the raw amino-acid sequence, 437 residues long: Glutamyl-tRNA reductase (437 aa).

Substrate-binding positions include Thr49 to Arg52, Ser109, Glu114 to Gln116, and Gln120. Catalysis depends on Cys50, which acts as the Nucleophile. Gly189–Ala194 is an NADP(+) binding site.

This sequence belongs to the glutamyl-tRNA reductase family. As to quaternary structure, homodimer.

It catalyses the reaction (S)-4-amino-5-oxopentanoate + tRNA(Glu) + NADP(+) = L-glutamyl-tRNA(Glu) + NADPH + H(+). Its pathway is porphyrin-containing compound metabolism; protoporphyrin-IX biosynthesis; 5-aminolevulinate from L-glutamyl-tRNA(Glu): step 1/2. The protein operates within porphyrin-containing compound metabolism; chlorophyll biosynthesis. Catalyzes the NADPH-dependent reduction of glutamyl-tRNA(Glu) to glutamate 1-semialdehyde (GSA). The sequence is that of Glutamyl-tRNA reductase from Chloroherpeton thalassium (strain ATCC 35110 / GB-78).